A 357-amino-acid chain; its full sequence is S-adenosyl-L-methionine:benzoic acid/salicylic acid carboxyl methyltransferase 1 (357 aa).

Residue Tyr-18 participates in S-adenosyl-L-homocysteine binding. A benzoate-binding site is contributed by Gln-25. Residues Cys-59, Asn-64, Asp-96, Leu-97, Ser-135, and Phe-136 each contribute to the S-adenosyl-L-homocysteine site. Trp-157 contributes to the benzoate binding site. Asn-168, Asp-254, Phe-256, and Asn-257 together coordinate Mg(2+). Gln-260 is a binding site for benzoate.

This sequence belongs to the methyltransferase superfamily. Type-7 methyltransferase family. Predominantly expressed in petal limbs and tubes of corollas.

It carries out the reaction benzoate + S-adenosyl-L-methionine = methyl benzoate + S-adenosyl-L-homocysteine. The enzyme catalyses salicylate + S-adenosyl-L-methionine = methyl salicylate + S-adenosyl-L-homocysteine. Its pathway is aromatic compound metabolism. Functionally, converts benzoic acid into the volatile ester methyl benzoates. This scent, mostly produced in a rhythmical, diurnal manner, attracts the pollinators. This chain is S-adenosyl-L-methionine:benzoic acid/salicylic acid carboxyl methyltransferase 1, found in Petunia hybrida (Petunia).